Here is a 43-residue protein sequence, read N- to C-terminus: KCNPAGGTVGGCRGVDRRHWISECKAKQSYVRALTMDSDKIVG.

This sequence belongs to the NGF-beta family.

In terms of biological role, NT-4 could play a role in oogenesis and/or early embryogenesis. NT-4 interacts with the low affinity NGF receptor and elicits neurite outgrowth from explanted dorsal root ganglia with no and lower activity in sympathetic and nodose ganglia, respectively. This chain is Neurotrophin-4 (NTF4), found in Macrovipera lebetinus (Levantine viper).